The chain runs to 509 residues: GMP synthase [glutamine-hydrolyzing] (509 aa).

Residues 4–193 (KILILDFGSQ…VVHICGCSQD (190 aa)) form the Glutamine amidotransferase type-1 domain. Catalysis depends on cysteine 79, which acts as the Nucleophile. Catalysis depends on residues histidine 167 and glutamate 169. Residues 194–384 (WTPDAFVETT…LGIDDIILKR (191 aa)) form the GMPS ATP-PPase domain. 221–227 (SGGVDSS) lines the ATP pocket.

As to quaternary structure, homodimer.

The enzyme catalyses XMP + L-glutamine + ATP + H2O = GMP + L-glutamate + AMP + diphosphate + 2 H(+). It participates in purine metabolism; GMP biosynthesis; GMP from XMP (L-Gln route): step 1/1. Catalyzes the synthesis of GMP from XMP. This Cytophaga hutchinsonii (strain ATCC 33406 / DSM 1761 / CIP 103989 / NBRC 15051 / NCIMB 9469 / D465) protein is GMP synthase [glutamine-hydrolyzing].